A 1256-amino-acid polypeptide reads, in one-letter code: Bifunctional autolysin (1256 aa).

A signal peptide spans 1–29 (MAKKFNYKLPSMVALTLVGSAVTAHQVQA). Over residues 103 to 138 (GDTRANQSATTNNTQPVAKSTSTTAPKTNTNVTNAG) the composition is skewed to polar residues. 3 disordered regions span residues 103-151 (GDTR…NSEN), 172-214 (KTAA…KTSL), and 419-440 (TQST…PSTG). 2 stretches are compositionally biased toward low complexity: residues 172 to 196 (KTAA…KVTT) and 421 to 439 (STTT…KPST). Residues 199 to 775 (ASAQPRSVAA…AVAQPKTAVK (577 aa)) form an N-acetylmuramoyl-L-alanine amidase region. GW domains lie at 443 to 517 (TVAA…YNTA), 519 to 593 (SPVN…DTAK), 612 to 686 (TVSS…YNNA), 688 to 762 (SPVN…VPAA), 784 to 859 (TTQT…VQNL), 861 to 936 (KEVK…APTA), and 943 to 1017 (AAKD…KELI). Residues 776 to 1256 (AYTVTKPQTT…GKYFDIPQYK (481 aa)) are endo-beta-N-acetylglucosaminidase.

It in the N-terminal section; belongs to the N-acetylmuramoyl-L-alanine amidase 2 family. The protein in the C-terminal section; belongs to the glycosyl hydrolase 73 family. In terms of assembly, oligomer; forms a ring structure at the cell surface which is important for efficient partitioning of daughter cells after cell division. Post-translationally, undergoes proteolytic processing to generate the two extracellular lytic enzymes, probably at the septal region on the cell surface.

Its subcellular location is the secreted. The catalysed reaction is Hydrolyzes the link between N-acetylmuramoyl residues and L-amino acid residues in certain cell-wall glycopeptides.. It catalyses the reaction an N(4)-(oligosaccharide-(1-&gt;3)-[oligosaccharide-(1-&gt;6)]-beta-D-Man-(1-&gt;4)-beta-D-GlcNAc-(1-&gt;4)-alpha-D-GlcNAc)-L-asparaginyl-[protein] + H2O = an oligosaccharide-(1-&gt;3)-[oligosaccharide-(1-&gt;6)]-beta-D-Man-(1-&gt;4)-D-GlcNAc + N(4)-(N-acetyl-beta-D-glucosaminyl)-L-asparaginyl-[protein]. Functionally, endohydrolysis of the di-N-acetylchitobiosyl unit in high-mannose glycopeptides and glycoproteins containing the -[(Man)5(GlcNAc)2]-Asn structure. One N-acetyl-D-glucosamine residue remains attached to the protein; the rest of the oligosaccharide is released intact. Cleaves the peptidoglycan connecting the daughter cells at the end of the cell division cycle, resulting in the separation of the two newly divided cells. Acts as an autolysin in penicillin-induced lysis. This is Bifunctional autolysin (atl) from Staphylococcus aureus (strain NCTC 8325 / PS 47).